A 357-amino-acid polypeptide reads, in one-letter code: Probable butyrate kinase 1 (357 aa).

It belongs to the acetokinase family.

The protein localises to the cytoplasm. It carries out the reaction butanoate + ATP = butanoyl phosphate + ADP. This Thermotoga maritima (strain ATCC 43589 / DSM 3109 / JCM 10099 / NBRC 100826 / MSB8) protein is Probable butyrate kinase 1.